The following is a 281-amino-acid chain: 2-dehydro-3-deoxyphosphooctonate aldolase (281 aa).

The protein belongs to the KdsA family.

It localises to the cytoplasm. It catalyses the reaction D-arabinose 5-phosphate + phosphoenolpyruvate + H2O = 3-deoxy-alpha-D-manno-2-octulosonate-8-phosphate + phosphate. It participates in carbohydrate biosynthesis; 3-deoxy-D-manno-octulosonate biosynthesis; 3-deoxy-D-manno-octulosonate from D-ribulose 5-phosphate: step 2/3. It functions in the pathway bacterial outer membrane biogenesis; lipopolysaccharide biosynthesis. The polypeptide is 2-dehydro-3-deoxyphosphooctonate aldolase (Pseudomonas aeruginosa (strain UCBPP-PA14)).